The sequence spans 62 residues: Negative regulatory protein YxlE (62 aa).

The next 2 membrane-spanning stretches (helical) occupy residues 7-27 and 37-57; these read MILPLIVLQLALAVFALISCI and WMWAAIIVCINIIGPILFFTV.

The protein localises to the cell membrane. Together with YxlD is important for negative regulation of sigma Y activity. This is Negative regulatory protein YxlE (yxlE) from Bacillus subtilis (strain 168).